Reading from the N-terminus, the 340-residue chain is Glyceraldehyde-3-phosphate dehydrogenase (340 aa).

NAD(+) contacts are provided by residues 11-12 and Gly111; that span reads SI. 140 to 142 lines the D-glyceraldehyde 3-phosphate pocket; the sequence is SCN. Residue Cys141 is the Nucleophile of the active site. Arg169 contacts NAD(+). 195–196 contacts D-glyceraldehyde 3-phosphate; the sequence is HG. Gln303 provides a ligand contact to NAD(+).

It belongs to the glyceraldehyde-3-phosphate dehydrogenase family. Homotetramer.

It is found in the cytoplasm. It catalyses the reaction D-glyceraldehyde 3-phosphate + phosphate + NADP(+) = (2R)-3-phospho-glyceroyl phosphate + NADPH + H(+). The enzyme catalyses D-glyceraldehyde 3-phosphate + phosphate + NAD(+) = (2R)-3-phospho-glyceroyl phosphate + NADH + H(+). The protein operates within carbohydrate degradation; glycolysis; pyruvate from D-glyceraldehyde 3-phosphate: step 1/5. The protein is Glyceraldehyde-3-phosphate dehydrogenase of Methanococcus maripaludis (strain DSM 14266 / JCM 13030 / NBRC 101832 / S2 / LL).